Here is a 397-residue protein sequence, read N- to C-terminus: Odorant receptor 22a (397 aa).

At methionine 1–lysine 49 the chain is on the cytoplasmic side. Residues leucine 50–glutamate 70 traverse the membrane as a helical segment. At tyrosine 71–serine 86 the chain is on the extracellular side. A helical membrane pass occupies residues leucine 87–phenylalanine 107. At lysine 108 to tyrosine 136 the chain is on the cytoplasmic side. The helical transmembrane segment at valine 137–methionine 157 threads the bilayer. The Extracellular portion of the chain corresponds to asparagine 158–glutamine 182. A helical membrane pass occupies residues phenylalanine 183–cysteine 203. Over threonine 204–proline 263 the chain is Cytoplasmic. Residues valine 264–leucine 280 traverse the membrane as a helical segment. Over glycine 281–asparagine 286 the chain is Extracellular. A helical membrane pass occupies residues leucine 287–phenylalanine 304. The Cytoplasmic portion of the chain corresponds to aspartate 305–glutamine 356. The chain crosses the membrane as a helical span at residues proline 357–valine 377. Residues lysine 378–glutamine 397 are Extracellular-facing.

This sequence belongs to the insect chemoreceptor superfamily. Heteromeric odorant receptor channel (TC 1.A.69) family. Or2a subfamily. Interacts with Orco, via conserved C-terminal cytoplasmic loops. Complexes exist early in the endomembrane system in olfactory sensory neurons (OSNs), coupling these complexes to the conserved ciliary trafficking pathway. Interacts with snmp1. Expressed with Orco in 17-20 sensory neurons on the medial-proximal edge of the antenna. Expressed in the ab3A neuron which responds to ethyl butyrate.

The protein localises to the cell membrane. Odorant receptor which mediates acceptance or avoidance behavior, depending on its substrates. The odorant receptor repertoire encodes a large collection of odor stimuli that vary widely in identity, intensity, and duration. Involved in the behavioral responses ethyl butyrate and to esters in more general. Complexes with Orco to form odorant-sensing units, providing sensitive and prolonged odorant signaling and calcium permeability. They are necessary and sufficient to promote functional reconstitution of odor-evoked signaling in sensory neurons that normally respond only to carbon dioxide. In Drosophila melanogaster (Fruit fly), this protein is Odorant receptor 22a (Or22a).